Here is a 307-residue protein sequence, read N- to C-terminus: Cyclin-dependent kinase 5 activator 1 (307 aa).

G2 carries N-myristoyl glycine lipidation. S8 is subject to Phosphoserine; by CDK5. The interval 97-136 (TFAQPPPAQPPAPPASQLSGSQTGGSSSVKKAPHPAVTSA) is disordered. Over residues 100 to 110 (QPPPAQPPAPP) the composition is skewed to pro residues. Residues 111–124 (ASQLSGSQTGGSSS) are compositionally biased toward low complexity. At T138 the chain carries Phosphothreonine; by CDK5.

The protein belongs to the cyclin-dependent kinase 5 activator family. Heterodimer composed of a catalytic subunit CDK5 and a regulatory subunit CDK5R1 (p25) and macromolecular complex composed of at least CDK5, CDK5R1 (p35) and CDK5RAP1 or CDK5RAP2 or CDK5RAP3. Only the heterodimer shows kinase activity. Interacts with EPHA4 and NGEF; may mediate the activation of NGEF by EPHA4. Interacts with RASGRF2. The complex p35/CDK5 interacts with CLOCK. Post-translationally, the p35 form is proteolytically cleaved by calpain, giving rise to the p25 form. P35 has a 5 to 10 fold shorter half-life compared to p25. The conversion results in deregulation of the CDK5 kinase: p25/CDK5 kinase displays an increased and altered tau phosphorylation in comparison to the p35/CDK5 kinase in vivo. Myristoylated. A proper myristoylation signal is essential for the proper distribution of p35. In terms of processing, ubiquitinated, leading to its degradation: degradation of p35 by proteasome results in down-regulation of CDK5 activity. During this process, CDK5 phosphorylates p35 and induces its ubiquitination and subsequent degradation. Ubiquitinated by the CRL2(FEM1B) complex, which recognizes the -Gly-Leu-Asp-Arg C-degron at the C-terminus, leading to its degradation. Post-translationally, phosphorylation at Ser-8 and Thr-138 by CDK5 prevents calpain-mediated proteolysis. As to expression, brain and neuron specific.

It localises to the cell membrane. It is found in the cell projection. The protein localises to the neuron projection. Its subcellular location is the nucleus. The protein resides in the cytoplasm. It localises to the perinuclear region. It is found in the perikaryon. Functionally, p35 is a neuron specific activator of CDK5. The complex p35/CDK5 is required for neurite outgrowth and cortical lamination. Involved in dendritic spine morphogenesis by mediating the EFNA1-EPHA4 signaling. Activator of TPKII. The complex p35/CDK5 participates in the regulation of the circadian clock by modulating the function of CLOCK protein: phosphorylates CLOCK at 'Thr-451' and 'Thr-461' and regulates the transcriptional activity of the CLOCK-BMAL1 heterodimer in association with altered stability and subcellular distribution. In Homo sapiens (Human), this protein is Cyclin-dependent kinase 5 activator 1 (CDK5R1).